Consider the following 369-residue polypeptide: uncharacterized protein (369 aa).

The interval 1 to 35 (MQTNNPSYFFRSESALQDEKRKEEKSHNPNGNPRN) is disordered. A compositionally biased stretch (basic and acidic residues) spans 17 to 27 (QDEKRKEEKSH). 6 WD repeats span residues 83–127 (GHSG…CVET), 130–169 (GHTD…SRLL), 174–213 (GHSR…GSQL), 220–260 (GHQS…HEET), 263–301 (EHPD…VKDI), and 304–341 (GHYE…DNNE).

This is an uncharacterized protein from Schizosaccharomyces pombe (strain 972 / ATCC 24843) (Fission yeast).